The following is a 235-amino-acid chain: Protein MAINTENANCE OF PSII UNDER HIGH LIGHT 1 (235 aa).

A helical transmembrane segment spans residues 127-147 (TAAIVAGIALIAVAAASSILL). Positions 181 to 235 (QPSTPSVTEAPPVAELETSLPETPSVAQQETSLPETMASEAQPEASSVPTTSSTS) are disordered. Composition is skewed to polar residues over residues 200–214 (LPET…TSLP) and 224–235 (EASSVPTTSSTS).

As to quaternary structure, interacts with psbA, psbB, psbC and psbD.

Its subcellular location is the plastid. The protein resides in the chloroplast thylakoid membrane. Functionally, interacts with photosystem II (PSII) core complexes and participates in the maintenance of normal PSII activity under photoinhibitory stress. May protect against photodamage or stabilize PSII under high-light stress. Participates in the maintainance of proper PSII function under high-light stress by protecting PSII from photooxidative damage. This Arabidopsis thaliana (Mouse-ear cress) protein is Protein MAINTENANCE OF PSII UNDER HIGH LIGHT 1.